The following is a 627-amino-acid chain: tRNA uridine 5-carboxymethylaminomethyl modification enzyme MnmG (627 aa).

FAD-binding positions include 13–18, valine 125, and serine 180; that span reads GGGHAG. 274-288 serves as a coordination point for NAD(+); sequence GPRYCPSIEDKVVRF. Glutamine 371 is an FAD binding site.

The protein belongs to the MnmG family. As to quaternary structure, homodimer. Heterotetramer of two MnmE and two MnmG subunits. The cofactor is FAD.

It localises to the cytoplasm. Functionally, NAD-binding protein involved in the addition of a carboxymethylaminomethyl (cmnm) group at the wobble position (U34) of certain tRNAs, forming tRNA-cmnm(5)s(2)U34. The polypeptide is tRNA uridine 5-carboxymethylaminomethyl modification enzyme MnmG (Francisella tularensis subsp. tularensis (strain FSC 198)).